A 220-amino-acid chain; its full sequence is Redox-sensing transcriptional repressor Rex (220 aa).

Residues 16 to 55 (MYVQVLETLKREGSQVVSSELLARTCSVNPSQIRKDLAYF) constitute a DNA-binding region (H-T-H motif). 90–95 (GIGNLG) is an NAD(+) binding site.

This sequence belongs to the transcriptional regulatory Rex family. Homodimer.

The protein localises to the cytoplasm. Functionally, modulates transcription in response to changes in cellular NADH/NAD(+) redox state. The protein is Redox-sensing transcriptional repressor Rex of Solidesulfovibrio magneticus (strain ATCC 700980 / DSM 13731 / RS-1) (Desulfovibrio magneticus).